Reading from the N-terminus, the 214-residue chain is Osteoclast-stimulating factor 1 (214 aa).

Residues 12–71 enclose the SH3 domain; sequence GQVKVFRALFTFDPRTPDELYFEEGDILYISDTSDTNWWKGTCRGRTGLIPSNYVAEQAE. 3 ANK repeats span residues 72–101, 105–135, and 139–168; these read TIDH…GING, AGNT…ELNQ, and LGDT…RTDI.

Ubiquitously expressed.

Its subcellular location is the cytoplasm. Functionally, induces bone resorption, acting probably through a signaling cascade which results in the secretion of factor(s) enhancing osteoclast formation and activity. The sequence is that of Osteoclast-stimulating factor 1 (ostf1) from Monopterus albus (Swamp eel).